The chain runs to 257 residues: ECF RNA polymerase sigma factor SigE (257 aa).

The interval 87–153 is sigma-70 factor domain-2; that stretch reads MPSWDELVRQ…RITTNLFLDM (67 aa). The short motif at 111–114 is the Polymerase core binding element; sequence NQHD. A sigma-70 factor domain-4 region spans residues 186 to 236; the sequence is SRLGADLQAALDSLPPEFRAAVVLCDIEGLSYEEIGATLGVKLGTVRSRIH. Positions 211 to 230 form a DNA-binding region, H-T-H motif; it reads DIEGLSYEEIGATLGVKLGT.

This sequence belongs to the sigma-70 factor family. ECF subfamily. Interacts transiently with the RNA polymerase catalytic core formed by RpoA, RpoB, RpoC and RpoZ (2 alpha, 1 beta, 1 beta' and 1 omega subunit) to form the RNA polymerase holoenzyme that can initiate transcription. Interacts (via sigma-70 factor domain 4) with RseA; interaction is abrogated by treatment of cells with H(2)O(2) or detergent.

In terms of biological role, sigma factors are initiation factors that promote the attachment of RNA polymerase to specific initiation sites and are then released. Extracytoplasmic function (ECF) sigma factors are held in an inactive form by an anti-sigma factor until released. This is ECF RNA polymerase sigma factor SigE (sigE) from Mycolicibacterium smegmatis (strain ATCC 700084 / mc(2)155) (Mycobacterium smegmatis).